The following is a 105-amino-acid chain: Platelet factor 4 (105 aa).

A signal peptide spans 1–29 (MSVAAVFRGLRPSPELLLLGLLFLPAVVA). The O-linked (GalNAc...) threonine glycan is linked to Thr-31. Intrachain disulfides connect Cys-44/Cys-71 and Cys-46/Cys-87. A Phosphoserine modification is found at Ser-61. Residue 96-102 (KKVIKKI) participates in heparin binding.

The protein belongs to the intercrine alpha (chemokine CxC) family. As to quaternary structure, homotetramer. Interacts with TNFAIP6 (via Link domain). Interacts with CCR1. Interacts with CXCR3. Interacts with THBD; this interaction enhances generation of activated protein C.

The protein resides in the secreted. Chemokine released during platelet aggregation that plays a role in different biological processes including hematopoiesis, cell proliferation, differentiation, and activation. Acts via different functional receptors including CCR1, CXCR3A or CXCR3B. Upon interaction with CXCR3A receptor, induces activated T-lymphocytes migration mediated via downstream Ras/extracellular signal-regulated kinase (ERK) signaling. Neutralizes the anticoagulant effect of heparin by binding more strongly to heparin than to the chondroitin-4-sulfate chains of the carrier molecule. Plays a role in the inhibition of hematopoiesis and in the maintenance of hematopoietic stem cell (HSC) quiescence. Chemotactic for neutrophils and monocytes via CCR1. Inhibits endothelial cell proliferation. In cooperation with toll-like receptor 8/TLR8, induces chromatin remodeling and activates inflammatory gene expression via the TBK1-IRF5 axis. In addition, induces myofibroblast differentiation and collagen synthesis in different precursor cells, including endothelial cells, by stimulating endothelial-to-mesenchymal transition. Interacts with thrombomodulin/THBD to enhance the activation of protein C and thus potentiates its anticoagulant activity. The protein is Platelet factor 4 (Pf4) of Mus musculus (Mouse).